We begin with the raw amino-acid sequence, 84 residues long: Mu-conotoxin-like Cal 12.2b (84 aa).

The N-terminal stretch at 1–19 (MKLTCVLVVLLLVLPFGDL) is a signal peptide. Positions 20–42 (ITTSNTEDNKRGATPWQNSLKAR) are excised as a propeptide. 4 disulfides stabilise this stretch: C45-C57, C52-C65, C59-C70, and C64-C76. A 6'-bromotryptophan modification is found at W72. P77 carries the post-translational modification 4-hydroxyproline. W81 carries the post-translational modification 6'-bromotryptophan.

This sequence belongs to the conotoxin O1 superfamily. Expressed by the venom duct.

The protein resides in the secreted. Mu-conotoxins block voltage-gated sodium channels. This toxin reversibly blocks voltage-gated sodium channel in cephalopods, with no alteration in the voltage dependence of sodium conductance or on the kinetics of inactivation. The protein is Mu-conotoxin-like Cal 12.2b of Californiconus californicus (California cone).